We begin with the raw amino-acid sequence, 512 residues long: Histidine ammonia-lyase (512 aa).

A cross-link (5-imidazolinone (Cys-Gly)) is located at residues 143-145 (CSG). Ser-144 carries the 2,3-didehydroalanine (Ser) modification.

The protein belongs to the PAL/histidase family. In terms of processing, contains an active site 4-methylidene-imidazol-5-one (MIO), which is formed autocatalytically by cyclization and dehydration of residues Cys-Ser-Gly.

It localises to the cytoplasm. It catalyses the reaction L-histidine = trans-urocanate + NH4(+). It participates in amino-acid degradation; L-histidine degradation into L-glutamate; N-formimidoyl-L-glutamate from L-histidine: step 1/3. This chain is Histidine ammonia-lyase, found in Streptomyces avermitilis (strain ATCC 31267 / DSM 46492 / JCM 5070 / NBRC 14893 / NCIMB 12804 / NRRL 8165 / MA-4680).